Here is a 209-residue protein sequence, read N- to C-terminus: Glutathione S-transferase 2 (209 aa).

Positions 1-81 (MLDFYYLPGS…YLCDQYGDED (81 aa)) constitute a GST N-terminal domain. Glutathione is bound by residues S10, 51 to 53 (RTI), and 65 to 67 (ESR). A GST C-terminal domain is found at 88 to 209 (DTIQRAIVNQ…SGAKEFLTYK (122 aa)).

This sequence belongs to the GST superfamily. Theta family. In terms of assembly, homodimer.

It catalyses the reaction RX + glutathione = an S-substituted glutathione + a halide anion + H(+). Conjugation of reduced glutathione to a wide number of exogenous and endogenous hydrophobic electrophiles. The polypeptide is Glutathione S-transferase 2 (GstD2) (Anopheles gambiae (African malaria mosquito)).